We begin with the raw amino-acid sequence, 314 residues long: MTASLTTKFLDNTYENPFMNASGVHCMTTPELDELANSKAGAFITKSATTLEREGNPKPRYISVPLGSINSMGLPNEGVDYYLSHVLNRQKKYPDAPAIFFSVAGMSIDENLGLLKKIQESEFNGITELNLSCPNVPGKPQVAYDFDLTKETLEKVFAFFNKPLGIKLPPYFDFAHFDIMAKILNEFPLAYVNSINSVGNGLFIDVEKESVVVKPKNGFGGIGGEYVKPTALANVRAFYTRLRPEIKIIGTGGIKSGKDAFEHLLCGASMLQIGTELQKEGVQIFERIERELKDIMEAKGYTSIDEFRGKLNSL.

Substrate contacts are provided by residues K46, 70-74, and N130; that span reads NSMGL. 46-47 is an FMN binding site; that stretch reads KS. N130 lines the FMN pocket. Catalysis depends on nucleophile residues S132 and C133. Residues K167 and I195 each coordinate FMN. Substrate is bound at residue 196–197; sequence NS. Residues G224, 252–253, and 274–275 contribute to the FMN site; these read GG and GT.

The protein belongs to the dihydroorotate dehydrogenase family. Type 1 subfamily. In terms of assembly, homodimer. FMN serves as cofactor.

The protein resides in the cytoplasm. The enzyme catalyses (S)-dihydroorotate + fumarate = orotate + succinate. It functions in the pathway pyrimidine metabolism; UMP biosynthesis via de novo pathway. Catalyzes the conversion of dihydroorotate to orotate with fumarate as the electron acceptor. The chain is Dihydroorotate dehydrogenase (fumarate) (URA1) from Saccharomyces bayanus (Yeast).